The following is a 272-amino-acid chain: Energy-coupling factor transporter ATP-binding protein EcfA1 (272 aa).

An ABC transporter domain is found at 2 to 237; it reads IKVSDVCFSY…KNIIEKAKID (236 aa). Residue 37–44 coordinates ATP; that stretch reads GHNGSGKS.

The protein belongs to the ABC transporter superfamily. Energy-coupling factor EcfA family. As to quaternary structure, forms a stable energy-coupling factor (ECF) transporter complex composed of 2 membrane-embedded substrate-binding proteins (S component), 2 ATP-binding proteins (A component) and 2 transmembrane proteins (T component).

It localises to the cell membrane. Its function is as follows. ATP-binding (A) component of a common energy-coupling factor (ECF) ABC-transporter complex. Unlike classic ABC transporters this ECF transporter provides the energy necessary to transport a number of different substrates. The sequence is that of Energy-coupling factor transporter ATP-binding protein EcfA1 from Mesomycoplasma hyopneumoniae (strain 7448) (Mycoplasma hyopneumoniae).